The chain runs to 697 residues: Elongation factor G 2 (697 aa).

A tr-type G domain is found at 5–280 (SKYRNIGIFA…AVVDYLPAPD (276 aa)). Residues 14-21 (AHVDAGKT), 78-82 (DTPGH), and 132-135 (NKLD) contribute to the GTP site.

This sequence belongs to the TRAFAC class translation factor GTPase superfamily. Classic translation factor GTPase family. EF-G/EF-2 subfamily.

It localises to the cytoplasm. Catalyzes the GTP-dependent ribosomal translocation step during translation elongation. During this step, the ribosome changes from the pre-translocational (PRE) to the post-translocational (POST) state as the newly formed A-site-bound peptidyl-tRNA and P-site-bound deacylated tRNA move to the P and E sites, respectively. Catalyzes the coordinated movement of the two tRNA molecules, the mRNA and conformational changes in the ribosome. This chain is Elongation factor G 2, found in Shewanella denitrificans (strain OS217 / ATCC BAA-1090 / DSM 15013).